Reading from the N-terminus, the 388-residue chain is Succinate--CoA ligase [ADP-forming] subunit beta (388 aa).

Positions 9-244 constitute an ATP-grasp domain; it reads KQLFARYGLP…PSQEDPREAQ (236 aa). ATP contacts are provided by residues K46, 53–55, E99, T102, and E107; that span reads GRG. Residues N199 and D213 each coordinate Mg(2+). Residues N264 and 321–323 each bind substrate; that span reads GIV.

This sequence belongs to the succinate/malate CoA ligase beta subunit family. Heterotetramer of two alpha and two beta subunits. Mg(2+) serves as cofactor.

The enzyme catalyses succinate + ATP + CoA = succinyl-CoA + ADP + phosphate. The catalysed reaction is GTP + succinate + CoA = succinyl-CoA + GDP + phosphate. It participates in carbohydrate metabolism; tricarboxylic acid cycle; succinate from succinyl-CoA (ligase route): step 1/1. Succinyl-CoA synthetase functions in the citric acid cycle (TCA), coupling the hydrolysis of succinyl-CoA to the synthesis of either ATP or GTP and thus represents the only step of substrate-level phosphorylation in the TCA. The beta subunit provides nucleotide specificity of the enzyme and binds the substrate succinate, while the binding sites for coenzyme A and phosphate are found in the alpha subunit. The protein is Succinate--CoA ligase [ADP-forming] subunit beta of Photorhabdus laumondii subsp. laumondii (strain DSM 15139 / CIP 105565 / TT01) (Photorhabdus luminescens subsp. laumondii).